Reading from the N-terminus, the 970-residue chain is m7GpppN-mRNA hydrolase (970 aa).

The 128-residue stretch at 101–228 (KSIPVRGAAI…IKYYLINSMM (128 aa)) folds into the Nudix hydrolase domain. Phosphoserine is present on S116. Residues 134–155 (GKISKDENDIDCCIREVKEEIG) carry the Nudix box motif. Mn(2+) is bound by residues E149 and E153. Over residues 302–314 (QHLKEQSGEHNQQ) the composition is skewed to basic and acidic residues. Disordered stretches follow at residues 302–341 (QHLKEQSGEHNQQKDQQSSFSSQQQPSIFPSLSEPFANNK), 417–465 (AVSQ…PKLK), 501–520 (SSQKIHASKPDTSFLPNDSV), and 528–692 (YEDF…LSST). Residues 315-334 (KDQQSSFSSQQQPSIFPSLS) show a composition bias toward low complexity. S439 carries the post-translational modification Phosphoserine. Residues 528–539 (YEDFESSSDEEV) show a composition bias toward acidic residues. Residues 560–576 (SEKDSRRSQKEKPRNDA) are compositionally biased toward basic and acidic residues. Over residues 577 to 590 (SKTNLNASAESNSV) the composition is skewed to polar residues. A compositionally biased stretch (low complexity) spans 596 to 608 (KSSPSTQSKQNSS). Residues 625-637 (DAYEVFESSSDEE) show a composition bias toward acidic residues. T677 carries the post-translational modification Phosphothreonine. Over residues 677–691 (TESNKSINETVGLSS) the composition is skewed to polar residues. Phosphoserine occurs at positions 679, 682, 751, 771, 773, and 778. The tract at residues 831–867 (LKKNDSTGYPRTEGGPSSEMSTSMKRNDATNNQELDK) is disordered. Residues 848–863 (SEMSTSMKRNDATNNQ) are compositionally biased toward polar residues.

This sequence belongs to the Nudix hydrolase family. DCP2 subfamily. Component of the decapping complex composed of DCP1 and DCP2. Interacts with mRNA, LSM2, LSM4 and LSM8. Interacts with EDC3. Mn(2+) is required as a cofactor.

It is found in the cytoplasm. The protein resides in the P-body. It carries out the reaction a 5'-end (N(7)-methyl 5'-triphosphoguanosine)-ribonucleoside in mRNA + H2O = N(7)-methyl-GDP + a 5'-end phospho-ribonucleoside in mRNA + 2 H(+). Catalytic component of the decapping complex necessary for the degradation of mRNAs, both in normal mRNA turnover and in nonsense-mediated mRNA decay. Removes the 7-methyl guanine cap structure from mRNA molecules, yielding a 5'-phosphorylated mRNA fragment and 7m-GDP. Decapping is the major pathway of mRNA degradation in yeast and occurs through deadenylation, decapping and subsequent 5' to 3' exonucleolytic decay of the transcript body. Blocks autophagy in nutrient-rich conditions by repressing the expression of ATG-related genes through degradation of their transcripts. This Saccharomyces cerevisiae (strain ATCC 204508 / S288c) (Baker's yeast) protein is m7GpppN-mRNA hydrolase.